The sequence spans 117 residues: Fluoride-specific ion channel FluC 2 (117 aa).

Transmembrane regions (helical) follow at residues 1–21 (MISI…RSAI), 33–53 (LPIA…LTIG), 60–80 (WFPA…STLA), and 95–115 (LFLN…YIGY). Gly71 and Thr74 together coordinate Na(+).

It belongs to the fluoride channel Fluc/FEX (TC 1.A.43) family.

It localises to the cell membrane. The catalysed reaction is fluoride(in) = fluoride(out). Na(+) is not transported, but it plays an essential structural role and its presence is essential for fluoride channel function. Functionally, fluoride-specific ion channel. Important for reducing fluoride concentration in the cell, thus reducing its toxicity. The chain is Fluoride-specific ion channel FluC 2 from Staphylococcus aureus (strain COL).